A 398-amino-acid polypeptide reads, in one-letter code: Sphingosine 1-phosphate receptor 5 (398 aa).

At 1–40 (MESGLLRPAPVSEVIVLHYNYTGKLRGARYQPGAGLRADA) the chain is on the extracellular side. N-linked (GlcNAc...) asparagine glycosylation is present at Asn-20. A helical membrane pass occupies residues 41–61 (VVCLAVCAFIVLENLAVLLVL). Over 62–70 (GRHPRFHAP) the chain is Cytoplasmic. The helical transmembrane segment at 71 to 91 (MFLLLGSLTLSDLLAGAAYAA) threads the bilayer. Over 92–111 (NILLSGPLTLKLSPALWFAR) the chain is Extracellular. The helical transmembrane segment at 112–132 (EGGVFVALTASVLSLLAIALE) threads the bilayer. Residues 133 to 151 (RSLTMARRGPAPVSSRGRT) lie on the Cytoplasmic side of the membrane. Residues 152–172 (LAMAAAAWGVSLLLGLLPALG) form a helical membrane-spanning segment. At 173–192 (WNCLGRLDACSTVLPLYAKA) the chain is on the extracellular side. The helical transmembrane segment at 193–213 (YVLFCVLAFVGILAAICALYA) threads the bilayer. At 214–252 (RIYCQVRANARRLPARPGTAGTTSTRARRKPRSLALLRT) the chain is on the cytoplasmic side. A helical membrane pass occupies residues 253-273 (LSVVLLAFVACWGPLFLLLLL). Residues 274 to 287 (DVACPARTCPVLLQ) are Extracellular-facing. Residues 288 to 308 (ADPFLGLAMANSLLNPIIYTL) traverse the membrane as a helical segment. Residues 309–398 (TNRDLRHALL…RTLVSEPAAD (90 aa)) are Cytoplasmic-facing. Cys-323 is lipidated: S-palmitoyl cysteine. A disordered region spans residues 329–398 (GRDPSGSQQS…RTLVSEPAAD (70 aa)). Positions 333–347 (SGSQQSASAAEASGG) are enriched in low complexity. A Phosphoserine modification is found at Ser-381.

It belongs to the G-protein coupled receptor 1 family. As to expression, widely expressed in the brain, most prominently in the corpus callosum, which is predominantly white matter. Detected in spleen, peripheral blood leukocytes, placenta, lung, aorta and fetal spleen. Low-level signal detected in many tissue extracts. Overexpressed in leukemic large granular lymphocytes. Isoform 1 is predominantly expressed in peripheral tissues. Isoform 2 is expressed in brain, spleen and peripheral blood leukocytes.

It localises to the cell membrane. Receptor for the lysosphingolipid sphingosine 1-phosphate (S1P). S1P is a bioactive lysophospholipid that elicits diverse physiological effect on most types of cells and tissues. Is coupled to both the G(i/0)alpha and G(12) subclass of heteromeric G-proteins. May play a regulatory role in the transformation of radial glial cells into astrocytes and may affect proliferative activity of these cells. This chain is Sphingosine 1-phosphate receptor 5 (S1PR5), found in Homo sapiens (Human).